Consider the following 409-residue polypeptide: Serine/threonine transporter SstT (409 aa).

The next 9 membrane-spanning stretches (helical) occupy residues 15–35 (LSLV…ALLA), 49–69 (FVSA…MASI), 82–102 (PILV…VIAS), 142–162 (ALMN…GVAI), 193–213 (LGIF…ALLG), 218–238 (LAVL…LIVF), 301–321 (GAAI…GIAV), 331–351 (VVAA…LLLI), and 357–377 (LFGI…IIGV).

This sequence belongs to the dicarboxylate/amino acid:cation symporter (DAACS) (TC 2.A.23) family.

It is found in the cell inner membrane. The enzyme catalyses L-serine(in) + Na(+)(in) = L-serine(out) + Na(+)(out). It catalyses the reaction L-threonine(in) + Na(+)(in) = L-threonine(out) + Na(+)(out). Its function is as follows. Involved in the import of serine and threonine into the cell, with the concomitant import of sodium (symport system). The sequence is that of Serine/threonine transporter SstT from Pseudomonas fluorescens (strain ATCC BAA-477 / NRRL B-23932 / Pf-5).